Reading from the N-terminus, the 555-residue chain is CTP synthase (555 aa).

The tract at residues 1 to 265 (MTRYIFITGG…GNRVCEKLNI (265 aa)) is amidoligase domain. Serine 13 serves as a coordination point for CTP. UTP is bound at residue serine 13. ATP-binding positions include 14-19 (SLGKGI) and aspartate 71. Mg(2+) contacts are provided by aspartate 71 and glutamate 139. CTP is bound by residues 146 to 148 (DIE), 186 to 191 (KTKPTQ), and lysine 222. UTP contacts are provided by residues 186–191 (KTKPTQ) and lysine 222. In terms of domain architecture, Glutamine amidotransferase type-1 spans 290–541 (TVAVVGKYVD…IKAGLAAKEA (252 aa)). L-glutamine is bound at residue glycine 351. Residue cysteine 378 is the Nucleophile; for glutamine hydrolysis of the active site. Residues 379 to 382 (LGMQ), glutamate 402, and arginine 469 each bind L-glutamine. Catalysis depends on residues histidine 514 and glutamate 516.

It belongs to the CTP synthase family. In terms of assembly, homotetramer.

It catalyses the reaction UTP + L-glutamine + ATP + H2O = CTP + L-glutamate + ADP + phosphate + 2 H(+). The catalysed reaction is L-glutamine + H2O = L-glutamate + NH4(+). The enzyme catalyses UTP + NH4(+) + ATP = CTP + ADP + phosphate + 2 H(+). The protein operates within pyrimidine metabolism; CTP biosynthesis via de novo pathway; CTP from UDP: step 2/2. Its activity is regulated as follows. Allosterically activated by GTP, when glutamine is the substrate; GTP has no effect on the reaction when ammonia is the substrate. The allosteric effector GTP functions by stabilizing the protein conformation that binds the tetrahedral intermediate(s) formed during glutamine hydrolysis. Inhibited by the product CTP, via allosteric rather than competitive inhibition. Its function is as follows. Catalyzes the ATP-dependent amination of UTP to CTP with either L-glutamine or ammonia as the source of nitrogen. Regulates intracellular CTP levels through interactions with the four ribonucleotide triphosphates. The chain is CTP synthase from Coxiella burnetii (strain CbuG_Q212) (Coxiella burnetii (strain Q212)).